Reading from the N-terminus, the 336-residue chain is 4-hydroxy-3-methylbut-2-enyl diphosphate reductase (336 aa).

C37 is a binding site for [4Fe-4S] cluster. The (2E)-4-hydroxy-3-methylbut-2-enyl diphosphate site is built by H66 and H99. Positions 66 and 99 each coordinate dimethylallyl diphosphate. The isopentenyl diphosphate site is built by H66 and H99. [4Fe-4S] cluster is bound at residue C121. H149 contributes to the (2E)-4-hydroxy-3-methylbut-2-enyl diphosphate binding site. Residue H149 coordinates dimethylallyl diphosphate. H149 contributes to the isopentenyl diphosphate binding site. E151 serves as the catalytic Proton donor. T189 is a binding site for (2E)-4-hydroxy-3-methylbut-2-enyl diphosphate. C219 is a [4Fe-4S] cluster binding site. The (2E)-4-hydroxy-3-methylbut-2-enyl diphosphate site is built by S247, S248, N249, and S292. The dimethylallyl diphosphate site is built by S247, S248, N249, and S292. Residues S247, S248, N249, and S292 each contribute to the isopentenyl diphosphate site.

This sequence belongs to the IspH family. It depends on [4Fe-4S] cluster as a cofactor.

It catalyses the reaction isopentenyl diphosphate + 2 oxidized [2Fe-2S]-[ferredoxin] + H2O = (2E)-4-hydroxy-3-methylbut-2-enyl diphosphate + 2 reduced [2Fe-2S]-[ferredoxin] + 2 H(+). The catalysed reaction is dimethylallyl diphosphate + 2 oxidized [2Fe-2S]-[ferredoxin] + H2O = (2E)-4-hydroxy-3-methylbut-2-enyl diphosphate + 2 reduced [2Fe-2S]-[ferredoxin] + 2 H(+). It functions in the pathway isoprenoid biosynthesis; dimethylallyl diphosphate biosynthesis; dimethylallyl diphosphate from (2E)-4-hydroxy-3-methylbutenyl diphosphate: step 1/1. Its pathway is isoprenoid biosynthesis; isopentenyl diphosphate biosynthesis via DXP pathway; isopentenyl diphosphate from 1-deoxy-D-xylulose 5-phosphate: step 6/6. Catalyzes the conversion of 1-hydroxy-2-methyl-2-(E)-butenyl 4-diphosphate (HMBPP) into a mixture of isopentenyl diphosphate (IPP) and dimethylallyl diphosphate (DMAPP). Acts in the terminal step of the DOXP/MEP pathway for isoprenoid precursor biosynthesis. The sequence is that of 4-hydroxy-3-methylbut-2-enyl diphosphate reductase from Nocardia farcinica (strain IFM 10152).